The primary structure comprises 362 residues: 3-dehydroquinate synthase (362 aa).

Residues 71 to 76 (DGEQYK), 105 to 109 (GVIGD), 129 to 130 (TT), lysine 142, lysine 151, and 169 to 172 (CLKT) contribute to the NAD(+) site. Residues glutamate 184, histidine 247, and histidine 264 each contribute to the Zn(2+) site.

It belongs to the sugar phosphate cyclases superfamily. Dehydroquinate synthase family. Co(2+) serves as cofactor. Requires Zn(2+) as cofactor. NAD(+) is required as a cofactor.

It is found in the cytoplasm. It catalyses the reaction 7-phospho-2-dehydro-3-deoxy-D-arabino-heptonate = 3-dehydroquinate + phosphate. It functions in the pathway metabolic intermediate biosynthesis; chorismate biosynthesis; chorismate from D-erythrose 4-phosphate and phosphoenolpyruvate: step 2/7. Catalyzes the conversion of 3-deoxy-D-arabino-heptulosonate 7-phosphate (DAHP) to dehydroquinate (DHQ). The protein is 3-dehydroquinate synthase of Salmonella agona (strain SL483).